A 175-amino-acid chain; its full sequence is Sec-independent protein translocase protein TatB (175 aa).

A helical membrane pass occupies residues 1-21 (MLDLGLTKMALIGVVALVVLG). Disordered regions lie at residues 104–132 (GGAL…RKNW) and 155–175 (SGAA…TRFF).

Belongs to the TatB family. In terms of assembly, the Tat system comprises two distinct complexes: a TatABC complex, containing multiple copies of TatA, TatB and TatC subunits, and a separate TatA complex, containing only TatA subunits. Substrates initially bind to the TatABC complex, which probably triggers association of the separate TatA complex to form the active translocon.

The protein resides in the cell inner membrane. Its function is as follows. Part of the twin-arginine translocation (Tat) system that transports large folded proteins containing a characteristic twin-arginine motif in their signal peptide across membranes. Together with TatC, TatB is part of a receptor directly interacting with Tat signal peptides. TatB may form an oligomeric binding site that transiently accommodates folded Tat precursor proteins before their translocation. This chain is Sec-independent protein translocase protein TatB, found in Paraburkholderia xenovorans (strain LB400).